The primary structure comprises 146 residues: MKDELNKVVVYTDGACSGNPGPGGWGAVLLFDNGEKTICGGHPNTTNNRMELTAVVQALKFLDVTYVIDLYTDSVYVKSGITSWIKKWKINGWRTADKLPVKNLELWLELDKIVKYHKITWYWVKAHSGNLYNEKADMLARSQIVK.

In terms of domain architecture, RNase H type-1 spans 4 to 145; sequence ELNKVVVYTD…ADMLARSQIV (142 aa). Residues Asp13, Glu51, Asp73, and Asp137 each contribute to the Mg(2+) site.

The protein belongs to the RNase H family. As to quaternary structure, monomer. It depends on Mg(2+) as a cofactor.

It localises to the cytoplasm. The enzyme catalyses Endonucleolytic cleavage to 5'-phosphomonoester.. In terms of biological role, endonuclease that specifically degrades the RNA of RNA-DNA hybrids. The polypeptide is Ribonuclease H (Ehrlichia ruminantium (strain Gardel)).